The chain runs to 427 residues: Methylthioribose kinase 2 (427 aa).

ATP is bound by residues 49-53 (DGNLN), Lys68, and 122-124 (RYI). Asn51 contacts substrate. Asp243 contributes to the substrate binding site. 260–262 (DPE) lines the ATP pocket. Arg370 provides a ligand contact to substrate.

Belongs to the methylthioribose kinase family. Homodimer.

It catalyses the reaction 5-(methylsulfanyl)-D-ribose + ATP = 5-(methylsulfanyl)-alpha-D-ribose 1-phosphate + ADP + H(+). It functions in the pathway amino-acid biosynthesis; L-methionine biosynthesis via salvage pathway; S-methyl-5-thio-alpha-D-ribose 1-phosphate from S-methyl-5'-thioadenosine (hydrolase route): step 2/2. Functionally, catalyzes the phosphorylation of methylthioribose into methylthioribose-1-phosphate. This is Methylthioribose kinase 2 (MTK2) from Oryza sativa subsp. japonica (Rice).